A 241-amino-acid chain; its full sequence is DNA repair protein RecO (241 aa).

Belongs to the RecO family.

Its function is as follows. Involved in DNA repair and RecF pathway recombination. The protein is DNA repair protein RecO of Azobacteroides pseudotrichonymphae genomovar. CFP2.